Consider the following 185-residue polypeptide: Ribosome-recycling factor (185 aa).

Residues 136 to 159 are disordered; sequence NEQLKSQQKDGKMSEDELKRSQDE.

The protein belongs to the RRF family.

It is found in the cytoplasm. Its function is as follows. Responsible for the release of ribosomes from messenger RNA at the termination of protein biosynthesis. May increase the efficiency of translation by recycling ribosomes from one round of translation to another. The chain is Ribosome-recycling factor from Pelotomaculum thermopropionicum (strain DSM 13744 / JCM 10971 / SI).